The sequence spans 135 residues: C-type lectin APL (135 aa).

4 disulfide bridges follow: Cys-3/Cys-14, Cys-31/Cys-131, Cys-38/Cys-133, and Cys-106/Cys-123. A C-type lectin domain is found at 10–132; the sequence is MNGLCYKIFD…CESKNAFLCQ (123 aa). The Ca(2+) site is built by Gln-96, Asp-98, Glu-104, Asn-119, and Asp-120. Positions 96–98 match the Galactose-binding motif; the sequence is QPD.

It belongs to the true venom lectin family. As to quaternary structure, homodimer; disulfide-linked. Expressed by the venom gland.

Its subcellular location is the secreted. Functionally, beta-galactoside lectin that agglutinates rabbit and human erythrocytes in a calcium-dependent fashion (MHC is 0.21 ug/ml on rabbit erythrocytes). Galactose (15 mM), lactose (20 mM), rhamnose (20 mM) and EGTA strongly inhibit this activity. In Agkistrodon piscivorus piscivorus (Eastern cottonmouth), this protein is C-type lectin APL.